Here is a 154-residue protein sequence, read N- to C-terminus: Low molecular weight protein-tyrosine-phosphatase PtpA (154 aa).

Cysteine 8 serves as the catalytic Nucleophile. Arginine 14 is a catalytic residue. Aspartate 120 functions as the Proton donor in the catalytic mechanism.

This sequence belongs to the low molecular weight phosphotyrosine protein phosphatase family. As to quaternary structure, interacts with host CORO1A. Phosphorylations at Tyr-122 and Tyr-123 are essential for phosphatase activity.

It is found in the secreted. The catalysed reaction is O-phospho-L-tyrosyl-[protein] + H2O = L-tyrosyl-[protein] + phosphate. Secreted tyrosine phosphatase that plays a critical role during infection as a bacterial effector protein that counteracts host defenses. Required for intramacrophage survival. The polypeptide is Low molecular weight protein-tyrosine-phosphatase PtpA (ptpA) (Staphylococcus aureus (strain MRSA252)).